The primary structure comprises 307 residues: Sesquiterpene synthase-like protein Agr10 (307 aa).

Residues 287–307 form a disordered region; it reads GRYFGDRGPENQSDIPTSSNR. The segment covering 296–307 has biased composition (polar residues); it reads ENQSDIPTSSNR.

This sequence belongs to the terpene synthase family.

The sequence is that of Sesquiterpene synthase-like protein Agr10 from Cyclocybe aegerita (Black poplar mushroom).